Here is a 237-residue protein sequence, read N- to C-terminus: Protein GrpE (237 aa).

2 disordered regions span residues 24-56 (LILE…KQLQ) and 204-237 (SAGS…PQPS).

It belongs to the GrpE family. Homodimer.

The protein resides in the cytoplasm. In terms of biological role, participates actively in the response to hyperosmotic and heat shock by preventing the aggregation of stress-denatured proteins, in association with DnaK and GrpE. It is the nucleotide exchange factor for DnaK and may function as a thermosensor. Unfolded proteins bind initially to DnaJ; upon interaction with the DnaJ-bound protein, DnaK hydrolyzes its bound ATP, resulting in the formation of a stable complex. GrpE releases ADP from DnaK; ATP binding to DnaK triggers the release of the substrate protein, thus completing the reaction cycle. Several rounds of ATP-dependent interactions between DnaJ, DnaK and GrpE are required for fully efficient folding. In Synechococcus sp. (strain JA-2-3B'a(2-13)) (Cyanobacteria bacterium Yellowstone B-Prime), this protein is Protein GrpE.